Consider the following 338-residue polypeptide: Large ribosomal subunit protein uL10 (338 aa).

The tract at residues 295–338 is disordered; that stretch reads EVPTIQPTTPPEKKEEEEKKEEEEEEAETVSEEELAEGLGALFG. The span at 312–330 shows a compositional bias: acidic residues; sequence EKKEEEEEEAETVSEEELA.

Belongs to the universal ribosomal protein uL10 family. Part of the 50S ribosomal subunit. Forms part of the ribosomal stalk which helps the ribosome interact with GTP-bound translation factors. Forms a heptameric L10(L12)2(L12)2(L12)2 complex, where L10 forms an elongated spine to which the L12 dimers bind in a sequential fashion.

In terms of biological role, forms part of the ribosomal stalk, playing a central role in the interaction of the ribosome with GTP-bound translation factors. The polypeptide is Large ribosomal subunit protein uL10 (Staphylothermus marinus (strain ATCC 43588 / DSM 3639 / JCM 9404 / F1)).